Here is a 323-residue protein sequence, read N- to C-terminus: Elongation factor P--(R)-beta-lysine ligase (323 aa).

Residue 74–76 (SPE) coordinates substrate. ATP is bound by residues 98–100 (RNE) and asparagine 107. Residue tyrosine 116 participates in substrate binding. 242–243 (EL) contacts ATP. Glutamate 249 provides a ligand contact to substrate. Glycine 298 provides a ligand contact to ATP.

It belongs to the class-II aminoacyl-tRNA synthetase family. EpmA subfamily. In terms of assembly, homodimer.

It carries out the reaction D-beta-lysine + L-lysyl-[protein] + ATP = N(6)-((3R)-3,6-diaminohexanoyl)-L-lysyl-[protein] + AMP + diphosphate + H(+). Functionally, with EpmB is involved in the beta-lysylation step of the post-translational modification of translation elongation factor P (EF-P). Catalyzes the ATP-dependent activation of (R)-beta-lysine produced by EpmB, forming a lysyl-adenylate, from which the beta-lysyl moiety is then transferred to the epsilon-amino group of a conserved specific lysine residue in EF-P. The protein is Elongation factor P--(R)-beta-lysine ligase of Vibrio parahaemolyticus serotype O3:K6 (strain RIMD 2210633).